Reading from the N-terminus, the 131-residue chain is Leptin receptor gene-related protein (131 aa).

The next 4 membrane-spanning stretches (helical) occupy residues 7 to 27, 32 to 52, 69 to 89, and 100 to 120; these read LVALSFSGAIGLTFLMLGCAL, VYWPLFVLIFYVISPIPYFIA, LAYFFTTGIVVSAFGLPVVLA, and GLVLAGNAVIFLTIQGFFLVF.

It belongs to the OB-RGRP/VPS55 family. Interacts with LEPR. Interacts with RAB13. As to expression, widely distributed in the brain, with elevated expression in the hypothalamic regions, including the paraventricular nucleus. In the placenta, present at high levels in the junctional zone situated towards the maternal aspect and throughout the labyrinth zone in close proximity to the developing fetus.

The protein localises to the golgi apparatus membrane. The protein resides in the endosome membrane. In terms of biological role, negatively regulates leptin receptor (LEPR) cell surface expression, and thus decreases response to leptin. Negatively regulates growth hormone (GH) receptor cell surface expression in liver. May play a role in liver resistance to GH during periods of reduced nutrient availability. The polypeptide is Leptin receptor gene-related protein (Leprot) (Mus musculus (Mouse)).